The primary structure comprises 347 residues: 3-isopropylmalate dehydrogenase (347 aa).

76–87 is an NAD(+) binding site; it reads GPKWTDPNNRPE. 4 residues coordinate substrate: Arg-94, Arg-104, Arg-132, and Asp-217. Asp-217, Asp-241, and Asp-245 together coordinate Mg(2+). Position 275 to 287 (275 to 287) interacts with NAD(+); sequence GSAPDIANEDKAN.

It belongs to the isocitrate and isopropylmalate dehydrogenases family. LeuB type 1 subfamily. Homodimer. Mg(2+) serves as cofactor. The cofactor is Mn(2+).

The protein resides in the cytoplasm. It catalyses the reaction (2R,3S)-3-isopropylmalate + NAD(+) = 4-methyl-2-oxopentanoate + CO2 + NADH. Its pathway is amino-acid biosynthesis; L-leucine biosynthesis; L-leucine from 3-methyl-2-oxobutanoate: step 3/4. Its function is as follows. Catalyzes the oxidation of 3-carboxy-2-hydroxy-4-methylpentanoate (3-isopropylmalate) to 3-carboxy-4-methyl-2-oxopentanoate. The product decarboxylates to 4-methyl-2 oxopentanoate. The protein is 3-isopropylmalate dehydrogenase of Staphylococcus epidermidis (strain ATCC 35984 / DSM 28319 / BCRC 17069 / CCUG 31568 / BM 3577 / RP62A).